The chain runs to 542 residues: Chaperonin GroEL 1 (542 aa).

ATP-binding positions include 29–32, 86–90, G415, 479–481, and D495; these read TIGP, DGTTT, and NAA.

It belongs to the chaperonin (HSP60) family. As to quaternary structure, forms a cylinder of 14 subunits composed of two heptameric rings stacked back-to-back. Interacts with the co-chaperonin GroES.

It is found in the cytoplasm. The catalysed reaction is ATP + H2O + a folded polypeptide = ADP + phosphate + an unfolded polypeptide.. Its function is as follows. Together with its co-chaperonin GroES, plays an essential role in assisting protein folding. The GroEL-GroES system forms a nano-cage that allows encapsulation of the non-native substrate proteins and provides a physical environment optimized to promote and accelerate protein folding. In Streptomyces avermitilis (strain ATCC 31267 / DSM 46492 / JCM 5070 / NBRC 14893 / NCIMB 12804 / NRRL 8165 / MA-4680), this protein is Chaperonin GroEL 1.